Reading from the N-terminus, the 124-residue chain is Ribonuclease pancreatic (124 aa).

Over residues 1–13 the composition is skewed to basic and acidic residues; the sequence is KESAAAKFERQHM. Residues 1–24 are disordered; sequence KESAAAKFERQHMDPSMSSASSSN. Lysine 7 and arginine 10 together coordinate substrate. Histidine 12 serves as the catalytic Proton acceptor. Intrachain disulfides connect cysteine 26-cysteine 84, cysteine 40-cysteine 95, cysteine 58-cysteine 110, and cysteine 65-cysteine 72. Residues 41-45, lysine 66, and arginine 85 each bind substrate; that span reads KPVNT. Residue histidine 119 is the Proton donor of the active site.

It belongs to the pancreatic ribonuclease family. As to quaternary structure, monomer. Interacts with and forms tight 1:1 complexes with RNH1. Dimerization of two such complexes may occur. Interaction with RNH1 inhibits this protein. As to expression, pancreas.

Its subcellular location is the secreted. It carries out the reaction an [RNA] containing cytidine + H2O = an [RNA]-3'-cytidine-3'-phosphate + a 5'-hydroxy-ribonucleotide-3'-[RNA].. The enzyme catalyses an [RNA] containing uridine + H2O = an [RNA]-3'-uridine-3'-phosphate + a 5'-hydroxy-ribonucleotide-3'-[RNA].. Functionally, endonuclease that catalyzes the cleavage of RNA on the 3' side of pyrimidine nucleotides. Acts on single-stranded and double-stranded RNA. This Dama dama (Fallow deer) protein is Ribonuclease pancreatic (RNASE1).